We begin with the raw amino-acid sequence, 605 residues long: Glutamine--fructose-6-phosphate aminotransferase [isomerizing] (605 aa).

Catalysis depends on Cys-2, which acts as the Nucleophile; for GATase activity. The 219-residue stretch at Cys-2–Asp-220 folds into the Glutamine amidotransferase type-2 domain. 2 consecutive SIS domains span residues Leu-286 to Pro-426 and Ala-458 to Pro-595. Lys-600 functions as the For Fru-6P isomerization activity in the catalytic mechanism.

As to quaternary structure, homodimer.

It is found in the cytoplasm. It carries out the reaction D-fructose 6-phosphate + L-glutamine = D-glucosamine 6-phosphate + L-glutamate. Functionally, catalyzes the first step in hexosamine metabolism, converting fructose-6P into glucosamine-6P using glutamine as a nitrogen source. This Lactiplantibacillus plantarum (strain ATCC BAA-793 / NCIMB 8826 / WCFS1) (Lactobacillus plantarum) protein is Glutamine--fructose-6-phosphate aminotransferase [isomerizing].